The sequence spans 1377 residues: DNA-directed RNA polymerase subunit beta (1377 aa).

Belongs to the RNA polymerase beta chain family. The RNAP catalytic core consists of 2 alpha, 1 beta, 1 beta' and 1 omega subunit. When a sigma factor is associated with the core the holoenzyme is formed, which can initiate transcription.

The catalysed reaction is RNA(n) + a ribonucleoside 5'-triphosphate = RNA(n+1) + diphosphate. Functionally, DNA-dependent RNA polymerase catalyzes the transcription of DNA into RNA using the four ribonucleoside triphosphates as substrates. This is DNA-directed RNA polymerase subunit beta from Brucella melitensis biotype 2 (strain ATCC 23457).